The sequence spans 179 residues: Hypoxanthine-guanine phosphoribosyltransferase (179 aa).

Positions 42 and 43 each coordinate diphosphate. Mg(2+) is bound by residues Glu-98 and Asp-99. Glu-102 acts as the Proton acceptor in catalysis. GMP-binding positions include Lys-130, 151–152 (FV), and Asp-158. Diphosphate is bound at residue Arg-164.

The protein belongs to the purine/pyrimidine phosphoribosyltransferase family. Mg(2+) is required as a cofactor.

It is found in the cytoplasm. The enzyme catalyses IMP + diphosphate = hypoxanthine + 5-phospho-alpha-D-ribose 1-diphosphate. It catalyses the reaction GMP + diphosphate = guanine + 5-phospho-alpha-D-ribose 1-diphosphate. Its pathway is purine metabolism; IMP biosynthesis via salvage pathway; IMP from hypoxanthine: step 1/1. It functions in the pathway purine metabolism; GMP biosynthesis via salvage pathway; GMP from guanine: step 1/1. Functionally, purine salvage pathway enzyme that catalyzes the transfer of the ribosyl-5-phosphate group from 5-phospho-alpha-D-ribose 1-diphosphate (PRPP) to the N9 position of the 6-oxopurines hypoxanthine and guanine to form the corresponding ribonucleotides IMP (inosine 5'-monophosphate) and GMP (guanosine 5'-monophosphate), with the release of PPi. This chain is Hypoxanthine-guanine phosphoribosyltransferase (hpt), found in Staphylococcus epidermidis (strain ATCC 35984 / DSM 28319 / BCRC 17069 / CCUG 31568 / BM 3577 / RP62A).